A 380-amino-acid polypeptide reads, in one-letter code: DNA replication and repair protein RecF (380 aa).

30–37 (GNNAQGKS) serves as a coordination point for ATP.

It belongs to the RecF family.

The protein resides in the cytoplasm. The RecF protein is involved in DNA metabolism; it is required for DNA replication and normal SOS inducibility. RecF binds preferentially to single-stranded, linear DNA. It also seems to bind ATP. In Rippkaea orientalis (strain PCC 8801 / RF-1) (Cyanothece sp. (strain PCC 8801)), this protein is DNA replication and repair protein RecF.